Reading from the N-terminus, the 270-residue chain is Malonyl-[acyl-carrier protein] O-methyltransferase (270 aa).

Belongs to the methyltransferase superfamily.

The catalysed reaction is malonyl-[ACP] + S-adenosyl-L-methionine = malonyl-[ACP] methyl ester + S-adenosyl-L-homocysteine. The protein operates within cofactor biosynthesis; biotin biosynthesis. Its function is as follows. Converts the free carboxyl group of a malonyl-thioester to its methyl ester by transfer of a methyl group from S-adenosyl-L-methionine (SAM). It allows to synthesize pimeloyl-ACP via the fatty acid synthetic pathway. This chain is Malonyl-[acyl-carrier protein] O-methyltransferase, found in Magnetococcus marinus (strain ATCC BAA-1437 / JCM 17883 / MC-1).